Consider the following 541-residue polypeptide: Atlastin-3 (541 aa).

The tract at residues 1–22 (MLSPQRTAAVASRGAGDAMENG) is disordered. An N-terminal hypervariable region (HVR) region spans residues 1 to 25 (MLSPQRTAAVASRGAGDAMENGKPG). Residues 1–445 (MLSPQRTAAV…NVFSTFRTPA (445 aa)) are Cytoplasmic-facing. Residues 57–306 (DLDVVVVSVA…LIPYVLNPSK (250 aa)) enclose the GB1/RHD3-type G domain. GDP-binding residues include Arg70, Lys71, Gly72, Lys73, Ser74, Phe75, and Arg109. Residue Asp142 coordinates Mg(2+). Residues Arg213, Asp214, Val272, and Ser275 each contribute to the GDP site. The interval 344 to 434 (MLQATAANNL…YENFCKHNGS (91 aa)) is 3HB (three-helix bundle) domain. At Lys391 the chain carries N6-acetyllysine. Residues 446 to 466 (VLFTGIAVLYIASGLTGFIGL) form a helical membrane-spanning segment. Position 467 (Glu467) is a topological domain, lumenal. Residues 468–488 (VVAQLFNCMVGLLLIALLTWG) traverse the membrane as a helical segment. Topologically, residues 489-541 (YIRYSGQYLELGGAIDSGAAYVLEQASSHIGNSTQAAVRDAIAGRPPADKKSQ) are cytoplasmic.

Belongs to the TRAFAC class dynamin-like GTPase superfamily. GB1/RHD3 GTPase family. GB1 subfamily. As to quaternary structure, monomeric and homodimeric. The homodimer, transiently formed by two molecules on opposing membranes, is the active form mediating ER membrane fusion. Interacts with ZFYVE27; both proteins are involved in endoplasmic reticulum tubular network organization. Interacts with REEP5; both proteins are involved in endoplasmic reticulum tubular network organization.

It localises to the endoplasmic reticulum membrane. It catalyses the reaction GTP + H2O = GDP + phosphate + H(+). In terms of biological role, atlastin-3 (ATL3) is a membrane-anchored GTPase that mediates the GTP-dependent fusion of endoplasmic reticulum (ER) membranes, maintaining the continuous ER network. It facilitates the formation of three-way junctions where ER tubules intersect. Two atlastin-3 on neighboring ER tubules bind GTP and form loose homodimers through the GB1/RHD3-type G domains and 3HB regions. Upon GTP hydrolysis, the 3HB regions tighten, pulling the membranes together to drive their fusion. After fusion, the homodimer disassembles upon release of inorganic phosphate (Pi). Subsequently, GDP dissociates, resetting the monomers to a conformation ready for a new fusion cycle. This is Atlastin-3 from Rattus norvegicus (Rat).